We begin with the raw amino-acid sequence, 145 residues long: 3-hydroxyacyl-[acyl-carrier-protein] dehydratase FabZ (145 aa).

His-49 is an active-site residue.

This sequence belongs to the thioester dehydratase family. FabZ subfamily.

It localises to the cytoplasm. It catalyses the reaction a (3R)-hydroxyacyl-[ACP] = a (2E)-enoyl-[ACP] + H2O. Its function is as follows. Involved in unsaturated fatty acids biosynthesis. Catalyzes the dehydration of short chain beta-hydroxyacyl-ACPs and long chain saturated and unsaturated beta-hydroxyacyl-ACPs. In Ehrlichia ruminantium (strain Gardel), this protein is 3-hydroxyacyl-[acyl-carrier-protein] dehydratase FabZ.